Consider the following 529-residue polypeptide: Bifunctional purine biosynthesis protein PurH (529 aa).

Residues 1–148 (MQQRRPVRRA…KNHKDVAIVV (148 aa)) form the MGS-like domain.

This sequence belongs to the PurH family.

The enzyme catalyses (6R)-10-formyltetrahydrofolate + 5-amino-1-(5-phospho-beta-D-ribosyl)imidazole-4-carboxamide = 5-formamido-1-(5-phospho-D-ribosyl)imidazole-4-carboxamide + (6S)-5,6,7,8-tetrahydrofolate. It carries out the reaction IMP + H2O = 5-formamido-1-(5-phospho-D-ribosyl)imidazole-4-carboxamide. It functions in the pathway purine metabolism; IMP biosynthesis via de novo pathway; 5-formamido-1-(5-phospho-D-ribosyl)imidazole-4-carboxamide from 5-amino-1-(5-phospho-D-ribosyl)imidazole-4-carboxamide (10-formyl THF route): step 1/1. Its pathway is purine metabolism; IMP biosynthesis via de novo pathway; IMP from 5-formamido-1-(5-phospho-D-ribosyl)imidazole-4-carboxamide: step 1/1. This Salmonella enteritidis PT4 (strain P125109) protein is Bifunctional purine biosynthesis protein PurH.